A 1766-amino-acid chain; its full sequence is DNA-directed RNA polymerase II subunit RPB1-B (1766 aa).

C69, C72, C79, and H82 together coordinate Zn(2+). The Mg(2+) site is built by D487, D489, and D491. Residues 813-825 (PHEFFFHTMAGRE) are bridging helix. Residues 1660–1766 (HAMSSAAPPS…EFGDEEEEEQ (107 aa)) form a disordered region. The segment covering 1706 to 1716 (RGDEPSTHRSD) has biased composition (basic and acidic residues). Residues 1742-1756 (PTAKTPQQAAPPTAA) are compositionally biased toward low complexity.

This sequence belongs to the RNA polymerase beta' chain family. Component of the RNA polymerase II (Pol II) complex consisting of 12 subunits.

Its subcellular location is the nucleus. The catalysed reaction is RNA(n) + a ribonucleoside 5'-triphosphate = RNA(n+1) + diphosphate. Functionally, DNA-dependent RNA polymerase catalyzes the transcription of DNA into RNA using the four ribonucleoside triphosphates as substrates. Largest and catalytic component of RNA polymerase II which synthesizes mRNA precursors and many functional non-coding RNAs. Forms the polymerase active center together with the second largest subunit. Pol II is the central component of the basal RNA polymerase II transcription machinery. It is composed of mobile elements that move relative to each other. RPB1 is part of the core element with the central large cleft, the clamp element that moves to open and close the cleft and the jaws that are thought to grab the incoming DNA template. At the start of transcription, a single-stranded DNA template strand of the promoter is positioned within the central active site cleft of Pol II. A bridging helix emanates from RPB1 and crosses the cleft near the catalytic site and is thought to promote translocation of Pol II by acting as a ratchet that moves the RNA-DNA hybrid through the active site by switching from straight to bent conformations at each step of nucleotide addition. During transcription elongation, Pol II moves on the template as the transcript elongates. The chain is DNA-directed RNA polymerase II subunit RPB1-B (TRP5.9) from Trypanosoma brucei brucei.